The sequence spans 245 residues: 1-(5-phosphoribosyl)-5-[(5-phosphoribosylamino)methylideneamino] imidazole-4-carboxamide isomerase (245 aa).

The Proton acceptor role is filled by D7. D129 acts as the Proton donor in catalysis.

This sequence belongs to the HisA/HisF family.

The protein localises to the cytoplasm. It carries out the reaction 1-(5-phospho-beta-D-ribosyl)-5-[(5-phospho-beta-D-ribosylamino)methylideneamino]imidazole-4-carboxamide = 5-[(5-phospho-1-deoxy-D-ribulos-1-ylimino)methylamino]-1-(5-phospho-beta-D-ribosyl)imidazole-4-carboxamide. It functions in the pathway amino-acid biosynthesis; L-histidine biosynthesis; L-histidine from 5-phospho-alpha-D-ribose 1-diphosphate: step 4/9. The protein is 1-(5-phosphoribosyl)-5-[(5-phosphoribosylamino)methylideneamino] imidazole-4-carboxamide isomerase of Shigella flexneri serotype 5b (strain 8401).